A 180-amino-acid chain; its full sequence is MTTQLDLIKSSIKSIPNYPKEGIIFRDITTLLEVPAAFKATIDLIVEQYRDKGITKVLGTESRGFIFGAPVALALGLPFELVRKPKKLPRETISQSYQLEYGQDTLEMHVDAISEGDNVLIIDDLLATGGTVEATVKLVQRLGGTVKHAAFVINLPELGGEKRLNNLGVDCYTLVNFEGH.

This sequence belongs to the purine/pyrimidine phosphoribosyltransferase family. In terms of assembly, homodimer.

Its subcellular location is the cytoplasm. The catalysed reaction is AMP + diphosphate = 5-phospho-alpha-D-ribose 1-diphosphate + adenine. It functions in the pathway purine metabolism; AMP biosynthesis via salvage pathway; AMP from adenine: step 1/1. Functionally, catalyzes a salvage reaction resulting in the formation of AMP, that is energically less costly than de novo synthesis. The protein is Adenine phosphoribosyltransferase of Haemophilus influenzae (strain PittEE).